We begin with the raw amino-acid sequence, 645 residues long: Zinc finger and SCAN domain-containing protein 2 (645 aa).

3 disordered regions span residues 1–25 (MMAA…EEDR), 37–75 (DDSW…GPQG), and 193–230 (EMPE…HGEV). The region spanning 59–132 (SAGKGSPQEE…ALVEDLTQTL (74 aa)) is the SCAN box domain. Basic and acidic residues predominate over residues 199–214 (SAQHSDGESDFERDAG). C2H2-type zinc fingers lie at residues 253–275 (YECP…ERTH), 281–303 (YKCD…QTTH), 309–331 (YKCR…QRIH), 337–359 (FQCA…QRTH), 365–387 (YSCP…QGIH), 393–415 (YECK…QRIH), 421–443 (YKCT…RRTH), 449–471 (YQCS…RRTH), 477–499 (YKCG…QGMH), 505–527 (YECL…QRIH), 533–555 (YKCS…QQTH), 561–583 (YKCL…QRAH), 589–611 (YRCP…QRIH), and 617–639 (YKCP…QRTH).

It belongs to the krueppel C2H2-type zinc-finger protein family.

It localises to the nucleus. In terms of biological role, may be involved in transcriptional regulation during the post-meiotic stages of spermatogenesis. The chain is Zinc finger and SCAN domain-containing protein 2 (ZSCAN2) from Pongo abelii (Sumatran orangutan).